A 360-amino-acid chain; its full sequence is MNAPLGGIWLWLPLLLTWLTPEVNSSWWYMRATGGSSRVMCDNVPGLVSSQRQLCHRHPDVMRAISQGVAEWTAECQHQFRQHRWNCNTLDRDHSLFGRVLLRSSRESAFVYAISSAGVVFAITRACSQGEVKSCSCDPKKMGSAKDSKGIFDWGGCSDNIDYGIKFARAFVDAKERKGKDARALMNLHNNRAGRKAVKRFLKQECKCHGVSGSCTLRTCWLAMADFRKTGDYLWRKYNGAIQVVMNQDGTGFTVANERFKKPTKNDLVYFENSPDYCIRDREAGSLGTAGRVCNLTSRGMDSCEVMCCGRGYDTSHVTRMTKCGCKFHWCCAVRCQDCLEALDVHTCKAPKNADWTTPT.

Positions 1 to 25 (MNAPLGGIWLWLPLLLTWLTPEVNS) are cleaved as a signal peptide. 11 disulfide bridges follow: Cys-76–Cys-87, Cys-127–Cys-135, Cys-137–Cys-157, Cys-206–Cys-220, Cys-208–Cys-215, Cys-278–Cys-309, Cys-294–Cys-304, Cys-308–Cys-348, Cys-324–Cys-339, Cys-326–Cys-336, and Cys-331–Cys-332. Residue Ser-212 is the site of O-palmitoleoyl serine; by PORCN attachment. Asn-295 carries N-linked (GlcNAc...) asparagine glycosylation.

It belongs to the Wnt family. Post-translationally, palmitoleoylation is required for efficient binding to frizzled receptors. Depalmitoleoylation leads to Wnt signaling pathway inhibition.

Its subcellular location is the secreted. It localises to the extracellular space. The protein localises to the extracellular matrix. Its function is as follows. Ligand for members of the frizzled family of seven transmembrane receptors. Functions in the canonical Wnt signaling pathway that results in activation of transcription factors of the TCF/LEF family. Functions as a upstream regulator of FGF10 expression. Plays an important role in embryonic lung development. May contribute to embryonic brain development by regulating the proliferation of dopaminergic precursors and neurons. In Gorilla gorilla gorilla (Western lowland gorilla), this protein is Protein Wnt-2 (WNT2).